Consider the following 190-residue polypeptide: Probable nicotinate-nucleotide adenylyltransferase (190 aa).

The protein belongs to the NadD family.

It catalyses the reaction nicotinate beta-D-ribonucleotide + ATP + H(+) = deamido-NAD(+) + diphosphate. It participates in cofactor biosynthesis; NAD(+) biosynthesis; deamido-NAD(+) from nicotinate D-ribonucleotide: step 1/1. Catalyzes the reversible adenylation of nicotinate mononucleotide (NaMN) to nicotinic acid adenine dinucleotide (NaAD). In Borrelia hermsii (strain HS1 / DAH), this protein is Probable nicotinate-nucleotide adenylyltransferase.